A 365-amino-acid polypeptide reads, in one-letter code: UBX domain-containing protein 2B (365 aa).

The tract at residues 1–97 (MADGGASPAQ…MSDDKENQRF (97 aa)) is disordered. Basic and acidic residues-rich tracts occupy residues 50–63 (DEAK…DKPT) and 73–95 (LKID…KENQ). In terms of domain architecture, SEP spans 175-240 (DVQILLKLWR…MEDHQEQEYV (66 aa)). The UBX domain occupies 286-363 (DSVPATKIQI…DILNTVILQQ (78 aa)).

It belongs to the NSFL1C family.

It localises to the nucleus. It is found in the cytoplasm. The protein localises to the cytosol. The protein resides in the endoplasmic reticulum. Its subcellular location is the golgi apparatus. It localises to the cytoskeleton. It is found in the microtubule organizing center. The protein localises to the centrosome. Adapter protein required for Golgi and endoplasmic reticulum biogenesis. Involved in Golgi and endoplasmic reticulum maintenance during interphase and in their reassembly at the end of mitosis. Regulates the centrosomal levels of kinase AURKA/Aurora A during mitotic progression by promoting AURKA removal from centrosomes in prophase. Also, regulates spindle orientation during mitosis. The protein is UBX domain-containing protein 2B (UBXN2B) of Gallus gallus (Chicken).